A 333-amino-acid chain; its full sequence is DNA-directed RNA polymerase subunit alpha (333 aa).

The interval 1-227 (MRKIKVAPFM…VMNKQLSVFN (227 aa)) is alpha N-terminal domain (alpha-NTD). The tract at residues 247–333 (ELKPFLAAVD…LVKKLEQLKA (87 aa)) is alpha C-terminal domain (alpha-CTD).

It belongs to the RNA polymerase alpha chain family. As to quaternary structure, homodimer. The RNAP catalytic core consists of 2 alpha, 1 beta, 1 beta' and 1 omega subunit. When a sigma factor is associated with the core the holoenzyme is formed, which can initiate transcription.

The enzyme catalyses RNA(n) + a ribonucleoside 5'-triphosphate = RNA(n+1) + diphosphate. Its function is as follows. DNA-dependent RNA polymerase catalyzes the transcription of DNA into RNA using the four ribonucleoside triphosphates as substrates. In Sulfurovum sp. (strain NBC37-1), this protein is DNA-directed RNA polymerase subunit alpha.